We begin with the raw amino-acid sequence, 397 residues long: Acetate kinase (397 aa).

Asn7 is a Mg(2+) binding site. Residue Lys14 participates in ATP binding. Position 88 (Arg88) interacts with substrate. Asp145 (proton donor/acceptor) is an active-site residue. ATP is bound by residues 205-209 (HLGNG), 279-281 (DMR), and 326-330 (GIGEN). Glu380 contacts Mg(2+).

This sequence belongs to the acetokinase family. In terms of assembly, homodimer. The cofactor is Mg(2+). Mn(2+) is required as a cofactor.

It localises to the cytoplasm. It catalyses the reaction acetate + ATP = acetyl phosphate + ADP. It participates in metabolic intermediate biosynthesis; acetyl-CoA biosynthesis; acetyl-CoA from acetate: step 1/2. In terms of biological role, catalyzes the formation of acetyl phosphate from acetate and ATP. Can also catalyze the reverse reaction. This chain is Acetate kinase, found in Campylobacter concisus (strain 13826).